A 1775-amino-acid chain; its full sequence is MDTPSSSADVVNDHHYRLVYFSNELPSDEQIGAHLRRLQALSKDRRHPILKVFLDDATEVLREELRKLPSHLLSLIAPFESIIDFAYQFGLRTGPFGGSTEGVSTCLIQLGTYISYHECPTNEPLTSPHGTLVALGSGLLAAAAVSFASRLPDLVKLGSEAIRIAFRMGLRVDQASQRLETRRAEGPAESWAYVFSELSEDEVQKELATMNASLNFPAPSQIFVSAVSPGSVTISGPPSRLKTLVRSSELLRYAKWASLPIFNGLCHTSHAYTHADAEDIVSAMDLPTNSSYIPHAPLLSTRNGQPFAAHTPAQLFEDVIFELLTGTIRWDTVTATLHDRVALHFVPEVVVKALGAPNALKGFNEAVQAHADPVRVITEDVLAQSLATPLPVRAPRDPKDSKIAIVGMSCRLPGGAVSNQSFWDLLEKGLDVHRRIPADRFDVDTHWDPTGQNPNASKTPFGCFIDDPALFDAGFFNMSPREAEQTDPMHRLALVTAHEALEQAGFVPNRTPSTNIERVGVFYGQASDDYREVNAGQEIGTYYIPGGNRAFAPGRINYFYKFGGPSFSCDTACSSSLATVQIACTTLWSGDADMVIAGGVNVLTNSDGFAGLCNGHFLTQTGNCKTWDAGADGYCRADGIGSVVMKRLEDAIADNDNILATVLSAATNQSAKAVSITHPHAGAQASLYKRVMDRAGVDPLDVSYVELHGTGTQAGDATEMESVTQVFAPMGPRRRTEPLHIGAVKSNIGHGEAAAGIAALIKVLLMYKKRSIPPHTGIKTELSPVLKKFLDKKRNIHIAFEQTPWKPVYNDTRYAVVNNFSAAGGNTTMLLEEAPVKEIQDDGDDREKHVVAVSAKSKVSLKGNLEALLAYLEENPETSLSDLAYTTLARRMHYNHRIAFSASSIDHVKKQLRYHIDSEEQVRPVPSNPPAVAFAFTGQGAFYPGMGAQLYNSVPSFRDHITHLDSLCQQHGFPSILPVIENIGAETQEEPAPIVTQLTITCLEIALTKYWASLGITPSVVVGASLGEYPALHAAGVLSASDTIFLVGQRAQQLEKHCQLRSHGMMAVRASVEQITECLGDQPYEVACINAPQDTVIDGLQADIASAREKLQAQGYKCHQLDVPYAFHSSQMDPALDSYEQIASSVTFHAPQVPVISPLLSDVVFDAKSIHAQYMRRATREPVNFVGALQAAQEIGIIDHNTVWVEAGPHPVLVSFIRNCLPEVKRLVPTLRRNENNWNTLADSLAGLHSDGLTLQWNEVHRPFEASLRLLDLPSYSWNEKRYWIQYRGTWTLTKGKEVSQPVPSSAVSTLTTSSIHQVLQEDVTGSTATFVARSNLMHPDLFEAANGHRMNDCGVATSSIHGDIAFTIADHLYKKITNTSAPGINITNLIVLQGLVAQKFSKADQLFELRATADLTTSPATTTIHWYNVTDGITSPEHFASAVVEYGDANVWLSQWRRLSHLVNSRIASLERMATEGKAAVLPRNMAYRLFNNLVDYADKYRGIQSAIMHEYEAMANVTLTTQGSGTWTVPPYFTDPVAHLAGLVMNGSDASNTIDYFYVTPGWAGLRFAKPLVKGGKYQSYVQMTPIEGQAGFWNGDVYVLQDGEIIGLVEKITFRRFPRSLLPTFFSPPDVAKPLHAAAPAVPVKPAAPAPVPVSAPAEAFKSAAPKTAAPVPAPAPVPAKRAEPAPAAAQAAATQNPTITGALDLIAKESALELSQLTDDAAFATLGVDSLMSLVLAEKFTSQLGIEVKSSIFMECETVGELKTYIEETFC.

The Starter acyltransferase (SAT) domain maps to 35-262 (LRRLQALSKD…YAKWASLPIF (228 aa)). The 434-residue stretch at 400–833 (DSKIAIVGMS…GGNTTMLLEE (434 aa)) folds into the Ketosynthase family 3 (KS3) domain. Active-site for beta-ketoacyl synthase activity residues include Cys573, His708, and His750. The Malonyl-CoA:ACP transacylase (MAT) domain occupies 934–1244 (FAFTGQGAFY…ENNWNTLADS (311 aa)). Positions 1313 to 1631 (TSSIHQVLQE…RSLLPTFFSP (319 aa)) are product template (PT) domain. The interval 1317-1451 (HQVLQEDVTG…SAVVEYGDAN (135 aa)) is N-terminal hotdog fold. The 310-residue stretch at 1317 to 1626 (HQVLQEDVTG…FRRFPRSLLP (310 aa)) folds into the PKS/mFAS DH domain. His1349 functions as the Proton acceptor; for dehydratase activity in the catalytic mechanism. Residues 1480–1626 (AAVLPRNMAY…FRRFPRSLLP (147 aa)) are C-terminal hotdog fold. Asp1537 serves as the catalytic Proton donor; for dehydratase activity. Residues 1671–1697 (TAAPVPAPAPVPAKRAEPAPAAAQAAA) are disordered. Residues 1688–1697 (PAPAAAQAAA) are compositionally biased toward low complexity. A Carrier domain is found at 1697-1774 (ATQNPTITGA…ELKTYIEETF (78 aa)). Position 1734 is an O-(pantetheine 4'-phosphoryl)serine (Ser1734).

The catalysed reaction is holo-[ACP] + 8 malonyl-CoA + 8 H(+) = atrochrysone carboxyl-[ACP] + 8 CO2 + 8 CoA + 2 H2O. It participates in secondary metabolite biosynthesis. Non-reducing polyketide synthase; part of the gene cluster that mediates the biosynthesis of physcion, a natural anthraquinone fungicide that can prevent plant fungal infections. The pathway begins with the polyketide synthase AcPKS that condenses 8 malonyl-CoA units to synthesize atrochrysone thioester which is released from the synthase by the atrochrysone carboxyl ACP thioesterase AcTE that breaks the thioester bond and leads to free atrochrysone carboxylic acid. Spontaneous decarboxylation of atrochrysone carboxylic acid leads to the formation of atrochrysone. Then, atrochrysone undergoes spontaneous dehydration and oxidation, giving the products emodin anthrone and emodin. The O-methyltransferase AcOMT then methylates the C-6 hydroxyl of emodin to form physcion. This chain is Atrochrysone carboxylic acid synthase, found in Aspergillus chevalieri (Eurotium chevalieri).